A 931-amino-acid polypeptide reads, in one-letter code: Isoleucine--tRNA ligase (931 aa).

The 'HIGH' region signature appears at 58-68 (PYANGHLHCGH). Glu559 contributes to the L-isoleucyl-5'-AMP binding site. Residues 600 to 604 (KLSKS) carry the 'KMSKS' region motif. Lys603 contributes to the ATP binding site. Positions 894, 897, 914, and 917 each coordinate Zn(2+).

This sequence belongs to the class-I aminoacyl-tRNA synthetase family. IleS type 1 subfamily. As to quaternary structure, monomer. The cofactor is Zn(2+).

It is found in the cytoplasm. It catalyses the reaction tRNA(Ile) + L-isoleucine + ATP = L-isoleucyl-tRNA(Ile) + AMP + diphosphate. In terms of biological role, catalyzes the attachment of isoleucine to tRNA(Ile). As IleRS can inadvertently accommodate and process structurally similar amino acids such as valine, to avoid such errors it has two additional distinct tRNA(Ile)-dependent editing activities. One activity is designated as 'pretransfer' editing and involves the hydrolysis of activated Val-AMP. The other activity is designated 'posttransfer' editing and involves deacylation of mischarged Val-tRNA(Ile). This is Isoleucine--tRNA ligase from Legionella pneumophila (strain Lens).